Reading from the N-terminus, the 452-residue chain is Tol-Pal system protein TolB (452 aa).

The signal sequence occupies residues 1–31; that stretch reads MCGVRRGMGVLLLFCAVALCAMPFVVRSVWG.

The protein belongs to the TolB family. As to quaternary structure, the Tol-Pal system is composed of five core proteins: the inner membrane proteins TolA, TolQ and TolR, the periplasmic protein TolB and the outer membrane protein Pal. They form a network linking the inner and outer membranes and the peptidoglycan layer.

It localises to the periplasm. In terms of biological role, part of the Tol-Pal system, which plays a role in outer membrane invagination during cell division and is important for maintaining outer membrane integrity. The sequence is that of Tol-Pal system protein TolB from Syntrophus aciditrophicus (strain SB).